The primary structure comprises 165 residues: NADPH-dependent 7-cyano-7-deazaguanine reductase (165 aa).

A disordered region spans residues 1–24 (MTTRSTDQTEHLRALGQKTPYPAA). The active-site Thioimide intermediate is the Cys-56. Asp-63 serves as the catalytic Proton donor. Substrate is bound by residues 78-80 (VES) and 97-98 (ME).

Belongs to the GTP cyclohydrolase I family. QueF type 1 subfamily.

It localises to the cytoplasm. The enzyme catalyses 7-aminomethyl-7-carbaguanine + 2 NADP(+) = 7-cyano-7-deazaguanine + 2 NADPH + 3 H(+). It functions in the pathway tRNA modification; tRNA-queuosine biosynthesis. Catalyzes the NADPH-dependent reduction of 7-cyano-7-deazaguanine (preQ0) to 7-aminomethyl-7-deazaguanine (preQ1). The protein is NADPH-dependent 7-cyano-7-deazaguanine reductase of Nitratidesulfovibrio vulgaris (strain ATCC 29579 / DSM 644 / CCUG 34227 / NCIMB 8303 / VKM B-1760 / Hildenborough) (Desulfovibrio vulgaris).